We begin with the raw amino-acid sequence, 746 residues long: MTCTSAFIKVVRFIQVVIDTREIRSLCTIRMQVESLQNLQAKIRNDERNHSLTKKYLTDDIVKKYQATKTSLGGTLAQCVNTNAYNPGALLPRSCDLNAYETFRDFFDAVIADYHKVPDGKIQHPKSNFGDLKSLSFTDLNTYGNLVVSTRVRLGRTVEGFGFGPTLTKETRIELENKISTALHNLSGEYEGTYYPLTGMSEEDRIKLVNDHFLFRNDDNVLRDAGGYIDWPTGRGIFINKQKNFLVWINEEDHIRVISMQKGGDLIAVYKRLADAIQELSKSLKFAFNDRLGFITFCPSNLGTTLRASVHAKIPMLASLPNFKEICEKHGIQPRGTHGEHTESVGGIYDLSNKRRLGLTELDAVTEMHSGVRALLELEVMLQEYNKGAPEGVMPVEPLTYLAKLLEGASIEKCYTRKYLTPEIIKKYDGKRTTHGATLAHMIRNGAYNNRSICPRTGEAECYSTFIDYLDPLICDYHGVKDSAFKHPAPTFGDLSKLPFGDLDPTGKFIVSTRVRVGRSVEDFLFPTIMSKTDRIKLEQVISGALKGLTGEHAGTYYPLTDMKEEDRKQLVEDHFLFKNDDPVLRDAGGYRDWPVGRGIFHNNSKTFLVWVCEEDHMRIISMQQGGNLAAVYKRLIEGINAIGKSMKFAHSDKYGYITCCPSNLGTSMRASVLLKIPKLSSQPKKLDEICAKYMLQARGLYGEHTESPDGTYDISNKRRLGLTELQAAHEMAEGVAKMIEIEKGL.

Approximate repeat units follow at residues 31-393 (MQVE…PEGV) and 394-705 (MPVE…YGEH). The Phosphagen kinase N-terminal 1 domain maps to 35 to 116 (SLQNLQAKIR…FDAVIADYHK (82 aa)). The Phosphagen kinase C-terminal 1 domain occupies 146–382 (LVVSTRVRLG…RALLELEVML (237 aa)). ATP-binding positions include 149-153 (STRVR), His212, and Arg256. Cys298 is an active-site residue. ATP-binding positions include 307 to 311 (RASVH) and 335 to 340 (RGTHGE). The 82-residue stretch at 398 to 479 (PLTYLAKLLE…LDPLICDYHG (82 aa)) folds into the Phosphagen kinase N-terminal 2 domain. In terms of domain architecture, Phosphagen kinase C-terminal 2 spans 509-746 (FIVSTRVRVG…AKMIEIEKGL (238 aa)). ATP is bound by residues 512–516 (STRVR), His575, and Arg619. Cys661 is a catalytic residue. ATP-binding positions include 670–674 (RASVL) and 699–704 (RGLYGE).

The protein belongs to the ATP:guanido phosphotransferase family. Requires Mg(2+) as cofactor.

It carries out the reaction taurocyamine + ATP = N-phosphotaurocyamine + ADP + H(+). This family of enzymes reversibly catalyzes the transfer of phosphate between ATP and various phosphogens (e.g. creatine phosphate). The chain is Taurocyamine kinase from Schistosoma mansoni (Blood fluke).